The primary structure comprises 453 residues: MQGAQEASASEMLPLLLPLLWAGALAQERRFQLEGPESLTVQEGLCVLVPCRLPTTLPASYYGYGYWFLEGADVPVATNDPDEEVQEETRGRFHLLWDPRRKNCSLSIRDARRRDNAAYFFRLKSKWMKYGYTSSKLSVRVMALTHRPNISIPGTLESGHPSNLTCSVPWVCEQGTPPIFSWMSAAPTSLGPRTTQSSVLTITPRPQDHSTNLTCQVTFPGAGVTMERTIQLNVSYAPQKVAISIFQGNSAAFKILQNTSSLPVLEGQALRLLCDADGNPPAHLSWFQGFPALNATPISNTGVLELPQVGSAEEGDFTCRAQHPLGSLQISLSLFVHWKPEGRAGGVLGAVWGASITTLVFLCVCFIFRVKTRRKKAAQPVQNTDDVNPVMVSGSRGHQHQFQTGIVSDHPAEAGPISEDEQELHYAVLHFHKVQPQEPKVTDTEYSEIKIHK.

Positions 1 to 26 are cleaved as a signal peptide; sequence MQGAQEASASEMLPLLLPLLWAGALA. Over 27–347 the chain is Extracellular; the sequence is QERRFQLEGP…WKPEGRAGGV (321 aa). Positions 28–123 constitute an Ig-like V-type domain; sequence ERRFQLEGPE…RDNAAYFFRL (96 aa). Disulfide bonds link Cys46–Cys172, Cys51–Cys104, and Cys166–Cys215. N-linked (GlcNAc...) asparagine glycosylation is present at Asn103. Arg122 provides a ligand contact to N-acetylneuraminate. An Ig-like C2-type 1 domain is found at 148 to 231; sequence PNISIPGTLE…AGVTMERTIQ (84 aa). 2 N-linked (GlcNAc...) asparagine glycosylation sites follow: Asn149 and Asn163. The N-linked (GlcNAc...) asparagine glycan is linked to Asn233. The region spanning 238-333 is the Ig-like C2-type 2 domain; that stretch reads PQKVAISIFQ…PLGSLQISLS (96 aa). A disulfide bridge connects residues Cys274 and Cys319. A helical transmembrane segment spans residues 348-368; sequence LGAVWGASITTLVFLCVCFIF. The Cytoplasmic segment spans residues 369 to 453; it reads RVKTRRKKAA…TEYSEIKIHK (85 aa). The ITIM motif motif lies at 424 to 429; sequence LHYAVL. The SLAM-like motif motif lies at 444-449; sequence TEYSEI.

The protein belongs to the immunoglobulin superfamily. SIGLEC (sialic acid binding Ig-like lectin) family. In terms of assembly, interacts with LEP. Expressed at high levels in placenta (cyto- and syncytiotrophoblastic cells) and at lower levels in spleen, peripheral blood leukocytes (predominantly B-cells) and small intestine.

It localises to the cell membrane. The protein localises to the secreted. Putative adhesion molecule that mediates sialic-acid dependent binding to cells. Binds to alpha-2,6-linked sialic acid. The sialic acid recognition site may be masked by cis interactions with sialic acids on the same cell surface. This chain is Sialic acid-binding Ig-like lectin 6 (SIGLEC6), found in Homo sapiens (Human).